Here is a 503-residue protein sequence, read N- to C-terminus: Probable cytosol aminopeptidase (503 aa).

Mn(2+)-binding residues include Lys-270 and Asp-275. Lys-282 is a catalytic residue. Mn(2+)-binding residues include Asp-293, Asp-352, and Glu-354. The active site involves Arg-356.

The protein belongs to the peptidase M17 family. It depends on Mn(2+) as a cofactor.

Its subcellular location is the cytoplasm. It carries out the reaction Release of an N-terminal amino acid, Xaa-|-Yaa-, in which Xaa is preferably Leu, but may be other amino acids including Pro although not Arg or Lys, and Yaa may be Pro. Amino acid amides and methyl esters are also readily hydrolyzed, but rates on arylamides are exceedingly low.. It catalyses the reaction Release of an N-terminal amino acid, preferentially leucine, but not glutamic or aspartic acids.. In terms of biological role, presumably involved in the processing and regular turnover of intracellular proteins. Catalyzes the removal of unsubstituted N-terminal amino acids from various peptides. The polypeptide is Probable cytosol aminopeptidase (Klebsiella pneumoniae subsp. pneumoniae (strain ATCC 700721 / MGH 78578)).